A 102-amino-acid polypeptide reads, in one-letter code: Anti-lipopolysaccharide factor (102 aa).

C32 and C53 are oxidised to a cystine.

Its function is as follows. Binds tightly to LPS and thus specifically inhibits the LPS-mediated activation of the hemolymph coagulation. It has a strong antibacterial effect especially on the growth of Gram-negative bacteria. This chain is Anti-lipopolysaccharide factor, found in Tachypleus tridentatus (Japanese horseshoe crab).